Reading from the N-terminus, the 507-residue chain is Beta-glucosidase 13 (507 aa).

An N-terminal signal peptide occupies residues 1-22 (MRTKYFSLLVFIIVLASNEVIA). Q50 contacts a beta-D-glucoside. N81 carries N-linked (GlcNAc...) asparagine glycosylation. A beta-D-glucoside-binding positions include H154 and 199 to 200 (NE). Residue E200 is the Proton donor of the active site. The cysteines at positions 219 and 227 are disulfide-linked. A glycan (N-linked (GlcNAc...) asparagine) is linked at N226. A beta-D-glucoside is bound at residue Y344. Residue N358 is glycosylated (N-linked (GlcNAc...) asparagine). A beta-D-glucoside contacts are provided by residues E414, W459, 466 to 467 (EW), and F475. Catalysis depends on E414, which acts as the Nucleophile.

It belongs to the glycosyl hydrolase 1 family.

It carries out the reaction Hydrolysis of terminal, non-reducing beta-D-glucosyl residues with release of beta-D-glucose.. The chain is Beta-glucosidase 13 from Arabidopsis thaliana (Mouse-ear cress).